Consider the following 91-residue polypeptide: Mercuric transport protein periplasmic component (91 aa).

Positions 1-19 (MKKLFASLALAAFVAPVFA) are cleaved as a signal peptide. In terms of domain architecture, HMA spans 22-88 (QTVTLSVPGM…ATEDAGYPSS (67 aa)). Residues C33 and C36 each coordinate Hg(2+).

The protein belongs to the MerP family. Monomer.

It localises to the periplasm. In terms of biological role, involved in mercury resistance. Acts as a mercury scavenger that specifically binds to a mercuric ion in the periplasm and probably passes it to the cytoplasmic mercuric reductase MerA via the mercuric transport protein MerT. In Acinetobacter calcoaceticus, this protein is Mercuric transport protein periplasmic component.